Consider the following 169-residue polypeptide: Cyclic pyranopterin monophosphate synthase (169 aa).

Residues 83 to 85 (LCH) and 121 to 122 (ME) contribute to the substrate site. The active site involves Asp-136.

The protein belongs to the MoaC family. Homohexamer; trimer of dimers.

The enzyme catalyses (8S)-3',8-cyclo-7,8-dihydroguanosine 5'-triphosphate = cyclic pyranopterin phosphate + diphosphate. It participates in cofactor biosynthesis; molybdopterin biosynthesis. In terms of biological role, catalyzes the conversion of (8S)-3',8-cyclo-7,8-dihydroguanosine 5'-triphosphate to cyclic pyranopterin monophosphate (cPMP). The protein is Cyclic pyranopterin monophosphate synthase of Rhodospirillum centenum (strain ATCC 51521 / SW).